The chain runs to 391 residues: Probable dual-specificity RNA methyltransferase RlmN (391 aa).

The tract at residues 1–33 (MTTPLDTPTREPLPLAPAGPGKLVMSAPRRGKP) is disordered. Residues 12–21 (PLPLAPAGPG) show a composition bias toward low complexity. The active-site Proton acceptor is Glu124. Residues 130–373 (YKNRDTICIS…TTVRDTRGSD (244 aa)) enclose the Radical SAM core domain. An intrachain disulfide couples Cys137 to Cys378. [4Fe-4S] cluster contacts are provided by Cys144, Cys148, and Cys151. Residues 199-200 (GE), Ser233, 256-258 (SLH), and Asn335 each bind S-adenosyl-L-methionine. Cys378 serves as the catalytic S-methylcysteine intermediate.

The protein belongs to the radical SAM superfamily. RlmN family. It depends on [4Fe-4S] cluster as a cofactor.

It localises to the cytoplasm. It catalyses the reaction adenosine(2503) in 23S rRNA + 2 reduced [2Fe-2S]-[ferredoxin] + 2 S-adenosyl-L-methionine = 2-methyladenosine(2503) in 23S rRNA + 5'-deoxyadenosine + L-methionine + 2 oxidized [2Fe-2S]-[ferredoxin] + S-adenosyl-L-homocysteine. The catalysed reaction is adenosine(37) in tRNA + 2 reduced [2Fe-2S]-[ferredoxin] + 2 S-adenosyl-L-methionine = 2-methyladenosine(37) in tRNA + 5'-deoxyadenosine + L-methionine + 2 oxidized [2Fe-2S]-[ferredoxin] + S-adenosyl-L-homocysteine. Functionally, specifically methylates position 2 of adenine 2503 in 23S rRNA and position 2 of adenine 37 in tRNAs. This chain is Probable dual-specificity RNA methyltransferase RlmN, found in Kineococcus radiotolerans (strain ATCC BAA-149 / DSM 14245 / SRS30216).